Here is a 600-residue protein sequence, read N- to C-terminus: Elongation factor 4 (600 aa).

Positions 5 to 187 (KYIRNFSIVA…EIVEKVPAPE (183 aa)) constitute a tr-type G domain. GTP is bound by residues 17 to 22 (DHGKST) and 134 to 137 (NKVD).

The protein belongs to the TRAFAC class translation factor GTPase superfamily. Classic translation factor GTPase family. LepA subfamily.

The protein resides in the cell membrane. The catalysed reaction is GTP + H2O = GDP + phosphate + H(+). In terms of biological role, required for accurate and efficient protein synthesis under certain stress conditions. May act as a fidelity factor of the translation reaction, by catalyzing a one-codon backward translocation of tRNAs on improperly translocated ribosomes. Back-translocation proceeds from a post-translocation (POST) complex to a pre-translocation (PRE) complex, thus giving elongation factor G a second chance to translocate the tRNAs correctly. Binds to ribosomes in a GTP-dependent manner. In Clostridium perfringens (strain ATCC 13124 / DSM 756 / JCM 1290 / NCIMB 6125 / NCTC 8237 / Type A), this protein is Elongation factor 4.